A 295-amino-acid polypeptide reads, in one-letter code: MENKPDWLRVRMPGGAVFDEVTELVRRYELNTVCEEAACPNIGECWNKRHATIMIMGSVCTRACAFCNVKVGVPNALDPDEPERVGAAISKLGLKHVVITSVDRDDLPDGGASHFAKCVREIRKRDSSVTVEILTPDFLGKPCAIDIIASARPDVYNHNLETVPRLYSRVRPRAKYFNSLNLLKEVKDKSPGVFTKSGFMLGLGESKEEVYQVMDDLRCAGVDFIVMGQYLQPTKNNIEVHRYVPPSEFEQYKLMAYAKGFSMVAASPLARSSYHAEDDFRKLKELRFARAKVNE.

7 residues coordinate [4Fe-4S] cluster: Cys34, Cys39, Cys45, Cys60, Cys64, Cys67, and Ser273. Positions Trp46 to Ser262 constitute a Radical SAM core domain.

It belongs to the radical SAM superfamily. Lipoyl synthase family. [4Fe-4S] cluster is required as a cofactor.

The protein localises to the cytoplasm. It carries out the reaction [[Fe-S] cluster scaffold protein carrying a second [4Fe-4S](2+) cluster] + N(6)-octanoyl-L-lysyl-[protein] + 2 oxidized [2Fe-2S]-[ferredoxin] + 2 S-adenosyl-L-methionine + 4 H(+) = [[Fe-S] cluster scaffold protein] + N(6)-[(R)-dihydrolipoyl]-L-lysyl-[protein] + 4 Fe(3+) + 2 hydrogen sulfide + 2 5'-deoxyadenosine + 2 L-methionine + 2 reduced [2Fe-2S]-[ferredoxin]. The protein operates within protein modification; protein lipoylation via endogenous pathway; protein N(6)-(lipoyl)lysine from octanoyl-[acyl-carrier-protein]: step 2/2. Functionally, catalyzes the radical-mediated insertion of two sulfur atoms into the C-6 and C-8 positions of the octanoyl moiety bound to the lipoyl domains of lipoate-dependent enzymes, thereby converting the octanoylated domains into lipoylated derivatives. The polypeptide is Lipoyl synthase (Anaplasma marginale (strain St. Maries)).